The chain runs to 572 residues: Methionine--tRNA ligase (572 aa).

The 'HIGH' region signature appears at 11 to 21 (PYVNHVPHLGT). Zn(2+) is bound by residues cysteine 143, cysteine 146, cysteine 156, and cysteine 159. Residues 334–338 (QFSKS) carry the 'KMSKS' region motif. Lysine 337 lines the ATP pocket.

It belongs to the class-I aminoacyl-tRNA synthetase family. MetG type 1 subfamily. It depends on Zn(2+) as a cofactor.

The protein localises to the cytoplasm. It carries out the reaction tRNA(Met) + L-methionine + ATP = L-methionyl-tRNA(Met) + AMP + diphosphate. Its function is as follows. Is required not only for elongation of protein synthesis but also for the initiation of all mRNA translation through initiator tRNA(fMet) aminoacylation. This Aeropyrum pernix (strain ATCC 700893 / DSM 11879 / JCM 9820 / NBRC 100138 / K1) protein is Methionine--tRNA ligase (metG).